The primary structure comprises 754 residues: MIDTVEYAATTPDQPQPFAELGLREDEYQRVREILGRRPTDTELAMYSVMWSEHCSYKSSKVHLRYFGETTTEEMRTGMLAGIGENAGVVDIGDGWAVTFKVESHNHPSYVEPYQGAATGVGGIVRDIMAMGARPVAVMDQLRFGAADALDTRRVLDGVVRGIGGYGNSLGLPNIGGETVFDSCYDGNPLVNALCVGVLRQEDLHLAFASGAGNKIILFGACTGLDGIGGVSVLASDTFDAEGARKKLPSVQVGDPFMEKVLIECCLELYAGGLVIGIQDLGGAGLSCATSELASAGDVGMAIQLDTVPRRAKDMTPAEVFCSESQERMCAVVAPENVDAFLAVCRKWEVLATVIGEVTDGDRLRITWHGETVVDVPPRTVAHEGPVYQRPVSRPESQEALNADSSKGLPRPVSGDELRATLLALLGSPHLCSRAFITEQYDRYVRGNTVLAEHADAGVLRIDESTGRGIALSTDASGRYTRLDPYAGAQLALAEAYRNVAVTGATPVAVTNCLNFGSPEDPGVMWQFAQAVRGLADGCAALKIPVTGGNVSFYNQTGAVAILPTPVVGVLGVLDNVARRIHTSLGTEPGEILMLLGDTYDEFDGSVWAQVMAGHLGGLPPMVDLAREKLLAEVLSSASRDELVSAAHDLSEGGLAQAIVESALAGETGCRIALPEDADPFVMLFSESAGRVLVAVPRPEESRFRSMCEARGLPAMRIGVVDQGSDSIEVRGQFTVSLAELRMTFEAVLPRFFG.

Residue His54 is part of the active site. Residues Tyr57 and Lys101 each contribute to the ATP site. Glu103 provides a ligand contact to Mg(2+). Substrate contacts are provided by residues 104–107 and Arg126; that span reads SHNH. Catalysis depends on His105, which acts as the Proton acceptor. Asp127 provides a ligand contact to Mg(2+). Gln252 provides a ligand contact to substrate. Asp280 lines the Mg(2+) pocket. 324 to 326 contacts substrate; sequence ESQ. The segment at 386–412 is disordered; it reads PVYQRPVSRPESQEALNADSSKGLPRP. 2 residues coordinate ATP: Asn512 and Gly549. Asn550 contacts Mg(2+). Residue Ser552 coordinates substrate.

This sequence belongs to the FGAMS family. In terms of assembly, monomer. Part of the FGAM synthase complex composed of 1 PurL, 1 PurQ and 2 PurS subunits.

It localises to the cytoplasm. The enzyme catalyses N(2)-formyl-N(1)-(5-phospho-beta-D-ribosyl)glycinamide + L-glutamine + ATP + H2O = 2-formamido-N(1)-(5-O-phospho-beta-D-ribosyl)acetamidine + L-glutamate + ADP + phosphate + H(+). The protein operates within purine metabolism; IMP biosynthesis via de novo pathway; 5-amino-1-(5-phospho-D-ribosyl)imidazole from N(2)-formyl-N(1)-(5-phospho-D-ribosyl)glycinamide: step 1/2. Its function is as follows. Part of the phosphoribosylformylglycinamidine synthase complex involved in the purines biosynthetic pathway. Catalyzes the ATP-dependent conversion of formylglycinamide ribonucleotide (FGAR) and glutamine to yield formylglycinamidine ribonucleotide (FGAM) and glutamate. The FGAM synthase complex is composed of three subunits. PurQ produces an ammonia molecule by converting glutamine to glutamate. PurL transfers the ammonia molecule to FGAR to form FGAM in an ATP-dependent manner. PurS interacts with PurQ and PurL and is thought to assist in the transfer of the ammonia molecule from PurQ to PurL. The sequence is that of Phosphoribosylformylglycinamidine synthase subunit PurL from Mycobacterium leprae (strain Br4923).